The primary structure comprises 386 residues: Delta(7)-sterol 5(6)-desaturase ERG3 (386 aa).

The next 3 membrane-spanning stretches (helical) occupy residues 120–140 (LSLF…VAYL), 172–192 (IPVM…GYSF), and 206–226 (AILW…YFLH). The Fatty acid hydroxylase domain occupies 214–337 (FILFTDCGIY…FTTLWDRLGN (124 aa)). The short motif at 226 to 230 (HRWLH) is the Histidine box-1 element. A Histidine box-2 motif is present at residues 239-243 (HKPHH). Residues 272–292 (PLLFPLHKVLYLFLFTFVNFW) traverse the membrane as a helical segment. Residues 314 to 318 (HTVHH) carry the Histidine box-3 motif.

Belongs to the sterol desaturase family. It depends on Fe cation as a cofactor.

Its subcellular location is the endoplasmic reticulum membrane. It carries out the reaction a Delta(7)-sterol + 2 Fe(II)-[cytochrome b5] + O2 + 2 H(+) = a Delta(5),Delta(7)-sterol + 2 Fe(III)-[cytochrome b5] + 2 H2O. The protein operates within steroid metabolism; ergosterol biosynthesis; ergosterol from zymosterol: step 3/5. C-5 sterol desaturase; part of the third module of ergosterol biosynthesis pathway that includes the late steps of the pathwa. ERG3 catalyzes the introduction of a C-5 double bond in the B ring to produce 5-dehydroepisterol. The third module or late pathway involves the ergosterol synthesis itself through consecutive reactions that mainly occur in the endoplasmic reticulum (ER) membrane. Firstly, the squalene synthase ERG9 catalyzes the condensation of 2 farnesyl pyrophosphate moieties to form squalene, which is the precursor of all steroids. Squalene synthase is crucial for balancing the incorporation of farnesyl diphosphate (FPP) into sterol and nonsterol isoprene synthesis. Secondly, the squalene epoxidase ERG1 catalyzes the stereospecific oxidation of squalene to (S)-2,3-epoxysqualene, which is considered to be a rate-limiting enzyme in steroid biosynthesis. Then, the lanosterol synthase ERG7 catalyzes the cyclization of (S)-2,3 oxidosqualene to lanosterol, a reaction that forms the sterol core. In the next steps, lanosterol is transformed to zymosterol through a complex process involving various demethylation, reduction and desaturation reactions. The lanosterol 14-alpha-demethylase ERG11 (also known as CYP51) catalyzes C14-demethylation of lanosterol to produce 4,4'-dimethyl cholesta-8,14,24-triene-3-beta-ol, which is critical for ergosterol biosynthesis. The C-14 reductase ERG24 reduces the C14=C15 double bond of 4,4-dimethyl-cholesta-8,14,24-trienol to produce 4,4-dimethyl-cholesta-8,24-dienol. 4,4-dimethyl-cholesta-8,24-dienol is substrate of the C-4 demethylation complex ERG25-ERG26-ERG27 in which ERG25 catalyzes the three-step monooxygenation required for the demethylation of 4,4-dimethyl and 4alpha-methylsterols, ERG26 catalyzes the oxidative decarboxylation that results in a reduction of the 3-beta-hydroxy group at the C-3 carbon to an oxo group, and ERG27 is responsible for the reduction of the keto group on the C-3. ERG28 has a role as a scaffold to help anchor ERG25, ERG26 and ERG27 to the endoplasmic reticulum and ERG29 regulates the activity of the iron-containing C4-methylsterol oxidase ERG25. Then, the sterol 24-C-methyltransferase ERG6 catalyzes the methyl transfer from S-adenosyl-methionine to the C-24 of zymosterol to form fecosterol. The C-8 sterol isomerase ERG2 catalyzes the reaction which results in unsaturation at C-7 in the B ring of sterols and thus converts fecosterol to episterol. The sterol-C5-desaturase ERG3 then catalyzes the introduction of a C-5 double bond in the B ring to produce 5-dehydroepisterol. The C-22 sterol desaturase ERG5 further converts 5-dehydroepisterol into ergosta-5,7,22,24(28)-tetraen-3beta-ol by forming the C-22(23) double bond in the sterol side chain. Finally, ergosta-5,7,22,24(28)-tetraen-3beta-ol is substrate of the C-24(28) sterol reductase ERG4 to produce ergosterol. The chain is Delta(7)-sterol 5(6)-desaturase ERG3 from Candida albicans (strain SC5314 / ATCC MYA-2876) (Yeast).